We begin with the raw amino-acid sequence, 172 residues long: Large ribosomal subunit protein bL21m (172 aa).

The transit peptide at 1 to 20 (MIRNIGSNLMKSSSSILLRN) directs the protein to the mitochondrion.

It belongs to the bacterial ribosomal protein bL21 family.

The protein localises to the mitochondrion. In Dictyostelium discoideum (Social amoeba), this protein is Large ribosomal subunit protein bL21m (mrpl21).